Reading from the N-terminus, the 445-residue chain is Anaerobilin synthase (445 aa).

One can recognise a Radical SAM core domain in the interval 52-287; sequence TASPRKRLVY…LQGCDFMDDA (236 aa). Tyr61 is an S-adenosyl-L-methionine binding site. [4Fe-4S] cluster contacts are provided by Cys67 and Cys71. Residue Phe73 coordinates S-adenosyl-L-methionine. A [4Fe-4S] cluster-binding site is contributed by Cys74. S-adenosyl-L-methionine-binding positions include Gly118, 119 to 120, Glu151, Gln178, Arg190, and Asp215; that span reads GT.

It belongs to the anaerobic coproporphyrinogen-III oxidase family. ChuW/HutW subfamily. Requires [4Fe-4S] cluster as cofactor.

The catalysed reaction is 2 reduced [flavodoxin] + heme b + 2 S-adenosyl-L-methionine = anaerobilin + 2 oxidized [flavodoxin] + Fe(2+) + 5'-deoxyadenosine + L-methionine + S-adenosyl-L-homocysteine. Inhibited by exposure to molecular oxygen. In terms of biological role, involved in heme degradation and iron utilization under anaerobic conditions. Catalyzes a radical-mediated mechanism facilitating iron liberation and the production of the tetrapyrrole product anaerobilin. Can use heme, mesoheme and deuteroheme as substrates. The chain is Anaerobilin synthase from Escherichia coli O157:H7.